Here is a 207-residue protein sequence, read N- to C-terminus: Hemin/hemoglobin-binding protein 1 (207 aa).

The first 27 residues, 1-27 (MKKVLVFAAFIVLFSFSFLSTGLTAQA), serve as a signal peptide directing secretion. The region spanning 29–148 (LKDGTYSVDY…RFDEGSAKAL (120 aa)) is the NEAT domain. Positions 151–178 (AVKSSDNNTTTPATKSDSSNKVTNPKSS) are disordered. Polar residues predominate over residues 154–178 (SSDNNTTTPATKSDSSNKVTNPKSS). The NPKXZ sorting signal signature appears at 174–178 (NPKSS). S177 bears the Murein peptidoglycan amidated serine mark. Positions 178-207 (SDSSQMFLYGIIFVATGAGLILLKRRAIFK) are cleaved as a propeptide — removed by sortase B.

It localises to the secreted. The protein localises to the cell wall. Its function is as follows. Binds both host hemin and hemoglobin with affinity in the nanomolar range and presumably directs it to membrane transporters. The polypeptide is Hemin/hemoglobin-binding protein 1 (Listeria monocytogenes serovar 1/2a (strain ATCC BAA-679 / EGD-e)).